The primary structure comprises 490 residues: Cardiolipin synthase 1 (490 aa).

Transmembrane regions (helical) follow at residues 9-29 and 42-62; these read ILTI…FVII and WAWL…YLFL. PLD phosphodiesterase domains lie at 225–252 and 403–430; these read MNNR…GDDY and QNGF…DFRS. Residues His230, Lys232, Asp237, His408, Lys410, and Asp415 contribute to the active site.

This sequence belongs to the phospholipase D family. Cardiolipin synthase subfamily.

It is found in the cell membrane. It catalyses the reaction 2 a 1,2-diacyl-sn-glycero-3-phospho-(1'-sn-glycerol) = a cardiolipin + glycerol. In terms of biological role, catalyzes the reversible phosphatidyl group transfer from one phosphatidylglycerol molecule to another to form cardiolipin (CL) (diphosphatidylglycerol) and glycerol. This chain is Cardiolipin synthase 1 (cls1), found in Staphylococcus epidermidis (strain ATCC 35984 / DSM 28319 / BCRC 17069 / CCUG 31568 / BM 3577 / RP62A).